Here is a 179-residue protein sequence, read N- to C-terminus: Orotate phosphoribosyltransferase (179 aa).

Residues R24, R89, K90, K93, and 115–123 contribute to the 5-phospho-alpha-D-ribose 1-diphosphate site; that span reads EDVITTGGA. Orotate contacts are provided by T119 and R147.

This sequence belongs to the purine/pyrimidine phosphoribosyltransferase family. PyrE subfamily. In terms of assembly, homodimer. Requires Mg(2+) as cofactor.

It catalyses the reaction orotidine 5'-phosphate + diphosphate = orotate + 5-phospho-alpha-D-ribose 1-diphosphate. The protein operates within pyrimidine metabolism; UMP biosynthesis via de novo pathway; UMP from orotate: step 1/2. In terms of biological role, catalyzes the transfer of a ribosyl phosphate group from 5-phosphoribose 1-diphosphate to orotate, leading to the formation of orotidine monophosphate (OMP). This Nocardioides sp. (strain ATCC BAA-499 / JS614) protein is Orotate phosphoribosyltransferase.